The chain runs to 376 residues: Natterin-2 (376 aa).

The first 18 residues, 1–18 (MNLSVLLVTLLLLSWTSA), serve as a signal peptide directing secretion. A propeptide spanning residues 19–27 (EKDLKVRVA) is cleaved from the precursor.

This sequence belongs to the natterin family. Contains 4 disulfide bonds. As to expression, expressed by the venom gland.

Its subcellular location is the secreted. With respect to regulation, inhibited by tissue-kallikrein inhibitor TKI and trasylol. Plasma kallikrein inhibitor PKSI527 and classical inhibitors of serine-, metallo-, thiol- or aspartate-peptidases evokes a minor inhibition of the peptide digestion. Shows nociceptive, edema-inducing and kininogenase activity with release of kallidin from low molecular weight kininogen. The cleavage occurs at Met-Lys bonds. The chain is Natterin-2 from Thalassophryne nattereri (Copper Joe toadfish).